A 147-amino-acid polypeptide reads, in one-letter code: Globin (147 aa).

Positions 1-147 (GLSAEQKTAL…LLGVLIENHQ (147 aa)) constitute a Globin domain. Positions 66 and 98 each coordinate heme b.

It belongs to the globin family. As to quaternary structure, homodimer.

The protein is Globin of Tritia mutabilis (Sea snail).